Reading from the N-terminus, the 879-residue chain is Valine--tRNA ligase (879 aa).

The 'HIGH' region motif lies at 43–53; the sequence is PNVTGVLHMGH. The 'KMSKS' region signature appears at 534 to 538; it reads KMSKS. Residue lysine 537 participates in ATP binding. A coiled-coil region spans residues 807–878; that stretch reads LGNMIDVEAE…LKESIAALKK (72 aa).

The protein belongs to the class-I aminoacyl-tRNA synthetase family. ValS type 1 subfamily. Monomer.

It localises to the cytoplasm. The enzyme catalyses tRNA(Val) + L-valine + ATP = L-valyl-tRNA(Val) + AMP + diphosphate. Catalyzes the attachment of valine to tRNA(Val). As ValRS can inadvertently accommodate and process structurally similar amino acids such as threonine, to avoid such errors, it has a 'posttransfer' editing activity that hydrolyzes mischarged Thr-tRNA(Val) in a tRNA-dependent manner. This Bacteroides thetaiotaomicron (strain ATCC 29148 / DSM 2079 / JCM 5827 / CCUG 10774 / NCTC 10582 / VPI-5482 / E50) protein is Valine--tRNA ligase.